We begin with the raw amino-acid sequence, 397 residues long: Elongation factor Tu 1 (397 aa).

The region spanning 10–206 is the tr-type G domain; the sequence is KPHVNIGTIG…AIDTWIPEPV (197 aa). The tract at residues 19–26 is G1; the sequence is GHVDHGKT. GTP is bound at residue 19–26; it reads GHVDHGKT. Threonine 26 contributes to the Mg(2+) binding site. The G2 stretch occupies residues 61-65; sequence GITIS. Positions 82–85 are G3; that stretch reads DCPG. GTP contacts are provided by residues 82 to 86 and 137 to 140; these read DCPGH and NKCD. A G4 region spans residues 137 to 140; the sequence is NKCD. The G5 stretch occupies residues 175-177; the sequence is SAL.

The protein belongs to the TRAFAC class translation factor GTPase superfamily. Classic translation factor GTPase family. EF-Tu/EF-1A subfamily. As to quaternary structure, monomer.

It localises to the cytoplasm. It catalyses the reaction GTP + H2O = GDP + phosphate + H(+). In terms of biological role, GTP hydrolase that promotes the GTP-dependent binding of aminoacyl-tRNA to the A-site of ribosomes during protein biosynthesis. The sequence is that of Elongation factor Tu 1 from Alkaliphilus metalliredigens (strain QYMF).